The sequence spans 244 residues: Octanoyltransferase (244 aa).

Residues 1 to 21 (MDKKLHSVSPESGPNSNLDLT) are disordered. Residues 9-21 (SPESGPNSNLDLT) show a composition bias toward polar residues. The region spanning 59 to 244 (PFSPQAVWLL…LNWEKINQSL (186 aa)) is the BPL/LPL catalytic domain. Substrate-binding positions include 101–108 (RGGEVTHH), 168–170 (SIG), and 181–183 (GFS). C199 (acyl-thioester intermediate) is an active-site residue.

Belongs to the LipB family.

It localises to the cytoplasm. The catalysed reaction is octanoyl-[ACP] + L-lysyl-[protein] = N(6)-octanoyl-L-lysyl-[protein] + holo-[ACP] + H(+). Its pathway is protein modification; protein lipoylation via endogenous pathway; protein N(6)-(lipoyl)lysine from octanoyl-[acyl-carrier-protein]: step 1/2. Its function is as follows. Catalyzes the transfer of endogenously produced octanoic acid from octanoyl-acyl-carrier-protein onto the lipoyl domains of lipoate-dependent enzymes. Lipoyl-ACP can also act as a substrate although octanoyl-ACP is likely to be the physiological substrate. The polypeptide is Octanoyltransferase (Prochlorococcus marinus (strain NATL1A)).